Reading from the N-terminus, the 469-residue chain is Sorting and assembly machinery component 50 homolog (469 aa).

The POTRA domain maps to valine 45–leucine 125. At lysine 255 the chain carries N6-methyllysine.

It belongs to the SAM50/omp85 family. As to quaternary structure, associates with the mitochondrial contact site and cristae organizing system (MICOS) complex, composed of at least MICOS10/MIC10, CHCHD3/MIC19, CHCHD6/MIC25, APOOL/MIC27, IMMT/MIC60, APOO/MIC23/MIC26 and QIL1/MIC13. This complex was also known under the names MINOS or MitOS complex. The MICOS complex associates with mitochondrial outer membrane proteins SAMM50, MTX1 and MTX2 (together described as components of the mitochondrial outer membrane sorting assembly machinery (SAM) complex) and DNAJC11, mitochondrial inner membrane protein TMEM11 and with HSPA9. The MICOS and SAM complexes together with DNAJC11 are part of a large protein complex spanning both membranes termed the mitochondrial intermembrane space bridging (MIB) complex. Interacts with IMMT/MIC60. Interacts with CHCHD3/MIC19. Interacts with ARMC1.

Its subcellular location is the mitochondrion outer membrane. The protein resides in the cytoplasm. The protein localises to the mitochondrion. Plays a crucial role in the maintenance of the structure of mitochondrial cristae and the proper assembly of the mitochondrial respiratory chain complexes. Required for the assembly of TOMM40 into the TOM complex. This is Sorting and assembly machinery component 50 homolog (SAMM50) from Bos taurus (Bovine).